We begin with the raw amino-acid sequence, 383 residues long: Succinyl-diaminopimelate desuccinylase (383 aa).

Residue His-69 participates in Zn(2+) binding. Residue Asp-71 is part of the active site. Asp-103 lines the Zn(2+) pocket. Glu-137 functions as the Proton acceptor in the catalytic mechanism. 3 residues coordinate Zn(2+): Glu-138, Glu-166, and His-357.

Belongs to the peptidase M20A family. DapE subfamily. As to quaternary structure, homodimer. The cofactor is Zn(2+). Requires Co(2+) as cofactor.

It catalyses the reaction N-succinyl-(2S,6S)-2,6-diaminopimelate + H2O = (2S,6S)-2,6-diaminopimelate + succinate. It functions in the pathway amino-acid biosynthesis; L-lysine biosynthesis via DAP pathway; LL-2,6-diaminopimelate from (S)-tetrahydrodipicolinate (succinylase route): step 3/3. In terms of biological role, catalyzes the hydrolysis of N-succinyl-L,L-diaminopimelic acid (SDAP), forming succinate and LL-2,6-diaminopimelate (DAP), an intermediate involved in the bacterial biosynthesis of lysine and meso-diaminopimelic acid, an essential component of bacterial cell walls. The chain is Succinyl-diaminopimelate desuccinylase from Rickettsia prowazekii (strain Madrid E).